A 299-amino-acid chain; its full sequence is HTH-type transcriptional regulator ArgP (299 aa).

The HTH lysR-type domain occupies 4 to 60 (PDYRALQALDAVIRERGFERAAQKLCITQSAVSQRIKQLENLFGQPLLVRTVPPQPT). Residues 21 to 40 (FERAAQKLCITQSAVSQRIK) constitute a DNA-binding region (H-T-H motif).

This sequence belongs to the LysR transcriptional regulatory family. Homodimer.

In terms of biological role, controls the transcription of genes involved in arginine and lysine metabolism. The chain is HTH-type transcriptional regulator ArgP from Proteus mirabilis (strain HI4320).